A 143-amino-acid chain; its full sequence is Hemoglobin subunit alpha-A (143 aa).

The 142-residue stretch at 2-143 (SLSGKDKSVV…LALALAERYR (142 aa)) folds into the Globin domain. His60 serves as a coordination point for O2. His89 contacts heme b.

This sequence belongs to the globin family. In terms of assembly, heterotetramer of two alpha chains and two beta chains. As to expression, red blood cells.

Its function is as follows. Involved in oxygen transport from gills to the various peripheral tissues. The sequence is that of Hemoglobin subunit alpha-A (hbaa) from Seriola quinqueradiata (Five-ray yellowtail).